The sequence spans 428 residues: Adenylosuccinate synthetase (428 aa).

Residues 12 to 18 (GDEGKGK) and 40 to 42 (GHT) contribute to the GTP site. Asp-13 functions as the Proton acceptor in the catalytic mechanism. Mg(2+)-binding residues include Asp-13 and Gly-40. IMP contacts are provided by residues 13–16 (DEGK), 38–41 (NAGH), Thr-129, Arg-143, Gln-224, Thr-239, and Arg-303. The active-site Proton donor is the His-41. Residue 299–305 (VTTGRSR) coordinates substrate. Residues Arg-305, 331–333 (KLD), and 413–415 (GVG) each bind GTP.

It belongs to the adenylosuccinate synthetase family. In terms of assembly, homodimer. Requires Mg(2+) as cofactor.

Its subcellular location is the cytoplasm. The catalysed reaction is IMP + L-aspartate + GTP = N(6)-(1,2-dicarboxyethyl)-AMP + GDP + phosphate + 2 H(+). Its pathway is purine metabolism; AMP biosynthesis via de novo pathway; AMP from IMP: step 1/2. In terms of biological role, plays an important role in the de novo pathway of purine nucleotide biosynthesis. Catalyzes the first committed step in the biosynthesis of AMP from IMP. In Saccharopolyspora erythraea (strain ATCC 11635 / DSM 40517 / JCM 4748 / NBRC 13426 / NCIMB 8594 / NRRL 2338), this protein is Adenylosuccinate synthetase.